Here is a 356-residue protein sequence, read N- to C-terminus: Phosphoribosyl pyrophosphate synthase-associated protein 1 (356 aa).

M1 is subject to N-acetylmethionine. S177 and S215 each carry phosphoserine.

The protein belongs to the ribose-phosphate pyrophosphokinase family. In terms of assembly, binds to PRPS1 and PRPS2.

Functionally, seems to play a negative regulatory role in 5-phosphoribose 1-diphosphate synthesis. The polypeptide is Phosphoribosyl pyrophosphate synthase-associated protein 1 (PRPSAP1) (Bos taurus (Bovine)).